Reading from the N-terminus, the 495-residue chain is YTH domain-containing protein ECT3 (495 aa).

Residues 261 to 398 form the YTH domain; it reads AKFYVIKSYS…EQGIKVIKIF (138 aa). RNA-binding positions include 267–269, Asp273, 283–284, Asn316, Trp340, Trp345, and Trp353; these read KSY and WS.

Expressed in the shoot apex, at the sites of leaf formation, and in emerging leaves.

It localises to the cytoplasm. Specifically recognizes and binds N6-methyladenosine (m6A)-containing RNAs, and regulates mRNA stability. M6A is a modification present at internal sites of mRNAs and some non-coding RNAs and plays a role in mRNA stability and processing. Required for the correct timing of leaf formation and normal leaf morphology. Required for proper trichome branching and morphology. Functions redundantly with ECT2. In Arabidopsis thaliana (Mouse-ear cress), this protein is YTH domain-containing protein ECT3.